A 352-amino-acid polypeptide reads, in one-letter code: Biotin synthase (352 aa).

A Radical SAM core domain is found at 44–262; sequence NRVQVSTLLS…LAVARLLMPK (219 aa). [4Fe-4S] cluster is bound by residues C59, C63, and C66. [2Fe-2S] cluster contacts are provided by C103, C134, C194, and R266.

This sequence belongs to the radical SAM superfamily. Biotin synthase family. Homodimer. Requires [4Fe-4S] cluster as cofactor. [2Fe-2S] cluster is required as a cofactor.

It carries out the reaction (4R,5S)-dethiobiotin + (sulfur carrier)-SH + 2 reduced [2Fe-2S]-[ferredoxin] + 2 S-adenosyl-L-methionine = (sulfur carrier)-H + biotin + 2 5'-deoxyadenosine + 2 L-methionine + 2 oxidized [2Fe-2S]-[ferredoxin]. It participates in cofactor biosynthesis; biotin biosynthesis; biotin from 7,8-diaminononanoate: step 2/2. Catalyzes the conversion of dethiobiotin (DTB) to biotin by the insertion of a sulfur atom into dethiobiotin via a radical-based mechanism. The protein is Biotin synthase of Pseudomonas putida (strain W619).